The sequence spans 239 residues: Norbelladine 4'-O-methyltransferase 4 (239 aa).

Residues valine 55, glutamate 77, 79 to 80 (GV), serine 85, aspartate 103, and alanine 132 contribute to the S-adenosyl-L-methionine site. Residue aspartate 155 coordinates a divalent metal cation. Residue aspartate 157 coordinates S-adenosyl-L-methionine. Aspartate 181 and asparagine 182 together coordinate a divalent metal cation.

This sequence belongs to the class I-like SAM-binding methyltransferase superfamily. Cation-dependent O-methyltransferase family. Mg(2+) is required as a cofactor.

The catalysed reaction is norbelladine + S-adenosyl-L-methionine = 4'-O-methylnorbelladine + S-adenosyl-L-homocysteine + H(+). Its pathway is alkaloid biosynthesis. In terms of biological role, 4'-O-methyltransferase converting norbelladine to 4'-O-methylnorbelladine. 4'-O-methylnorbelladine is a precursor to all Amaryllidaceae alkaloids such as galanthamine, lycorine and haemanthamine, and including haemanthamine- and crinamine-type alkaloids, promising anticancer agents. This is Norbelladine 4'-O-methyltransferase 4 from Narcissus aff. pseudonarcissus MK-2014 (Daffodil).